Reading from the N-terminus, the 2276-residue chain is Protein Ycf2 (2276 aa).

An ATP-binding site is contributed by 1621–1628; sequence GSIGTGRS.

Belongs to the Ycf2 family.

Its subcellular location is the plastid. The protein resides in the chloroplast stroma. In terms of biological role, probable ATPase of unknown function. Its presence in a non-photosynthetic plant (Epifagus virginiana) and experiments in tobacco indicate that it has an essential function which is probably not related to photosynthesis. The polypeptide is Protein Ycf2 (Guizotia abyssinica (Niger)).